The following is a 142-amino-acid chain: Transcription antitermination protein NusB (142 aa).

It belongs to the NusB family.

Its function is as follows. Involved in transcription antitermination. Required for transcription of ribosomal RNA (rRNA) genes. Binds specifically to the boxA antiterminator sequence of the ribosomal RNA (rrn) operons. The chain is Transcription antitermination protein NusB from Actinobacillus succinogenes (strain ATCC 55618 / DSM 22257 / CCUG 43843 / 130Z).